The primary structure comprises 48 residues: DNA gyrase inhibitor YacG (48 aa).

4 residues coordinate Zn(2+): C9, C12, C28, and C32.

Belongs to the DNA gyrase inhibitor YacG family. Interacts with GyrB. It depends on Zn(2+) as a cofactor.

In terms of biological role, inhibits all the catalytic activities of DNA gyrase by preventing its interaction with DNA. Acts by binding directly to the C-terminal domain of GyrB, which probably disrupts DNA binding by the gyrase. This chain is DNA gyrase inhibitor YacG, found in Wigglesworthia glossinidia brevipalpis.